Here is a 424-residue protein sequence, read N- to C-terminus: Histidine--tRNA ligase (424 aa).

It belongs to the class-II aminoacyl-tRNA synthetase family. As to quaternary structure, homodimer.

Its subcellular location is the cytoplasm. The enzyme catalyses tRNA(His) + L-histidine + ATP = L-histidyl-tRNA(His) + AMP + diphosphate + H(+). In Shewanella woodyi (strain ATCC 51908 / MS32), this protein is Histidine--tRNA ligase.